The following is a 160-amino-acid chain: Eukaryotic translation initiation factor 5A-2 (160 aa).

The segment covering 1 to 12 has biased composition (basic and acidic residues); the sequence is MSDEEHHFESKA. Residues 1-21 are disordered; it reads MSDEEHHFESKADAGASKTFP. Lys-52 bears the Hypusine mark.

It belongs to the eIF-5A family. Post-translationally, lys-52 undergoes hypusination, a unique post-translational modification that consists in the addition of a butylamino group from spermidine to lysine side chain, leading to the formation of the unusual amino acid hypusine. eIF-5As are the only known proteins to undergo this modification, which is essential for their function.

Functionally, translation factor that promotes translation elongation and termination, particularly upon ribosome stalling at specific amino acid sequence contexts. Binds between the exit (E) and peptidyl (P) site of the ribosome and promotes rescue of stalled ribosome: specifically required for efficient translation of polyproline-containing peptides as well as other motifs that stall the ribosome. Acts as a ribosome quality control (RQC) cofactor by joining the RQC complex to facilitate peptidyl transfer during CAT tailing step. This chain is Eukaryotic translation initiation factor 5A-2, found in Solanum lycopersicum (Tomato).